Reading from the N-terminus, the 366-residue chain is tRNA/tmRNA (uracil-C(5))-methyltransferase (366 aa).

S-adenosyl-L-methionine-binding residues include Gln190, Tyr218, Asn223, Glu239, and Asp299. Cys324 functions as the Nucleophile in the catalytic mechanism. Glu358 serves as the catalytic Proton acceptor.

This sequence belongs to the class I-like SAM-binding methyltransferase superfamily. RNA M5U methyltransferase family. TrmA subfamily.

It catalyses the reaction uridine(54) in tRNA + S-adenosyl-L-methionine = 5-methyluridine(54) in tRNA + S-adenosyl-L-homocysteine + H(+). The catalysed reaction is uridine(341) in tmRNA + S-adenosyl-L-methionine = 5-methyluridine(341) in tmRNA + S-adenosyl-L-homocysteine + H(+). Its function is as follows. Dual-specificity methyltransferase that catalyzes the formation of 5-methyluridine at position 54 (m5U54) in all tRNAs, and that of position 341 (m5U341) in tmRNA (transfer-mRNA). In Cronobacter sakazakii (strain ATCC BAA-894) (Enterobacter sakazakii), this protein is tRNA/tmRNA (uracil-C(5))-methyltransferase.